A 374-amino-acid chain; its full sequence is Chaperone protein DnaJ (374 aa).

Residues 5–70 (DYYEVLGVNL…RKRASYDQFG (66 aa)) enclose the J domain. The segment at 133–210 (GLSRTIKVPT…CHGQGRQQQT (78 aa)) adopts a CR-type zinc-finger fold. Residues Cys-146, Cys-149, Cys-162, Cys-165, Cys-184, Cys-187, Cys-198, and Cys-201 each contribute to the Zn(2+) site. CXXCXGXG motif repeat units lie at residues 146–153 (CKTCNGSG), 162–169 (CPRCNGSG), 184–191 (CSVCRGRG), and 198–205 (CTDCHGQG).

This sequence belongs to the DnaJ family. Homodimer. The cofactor is Zn(2+).

It localises to the cytoplasm. Functionally, participates actively in the response to hyperosmotic and heat shock by preventing the aggregation of stress-denatured proteins and by disaggregating proteins, also in an autonomous, DnaK-independent fashion. Unfolded proteins bind initially to DnaJ; upon interaction with the DnaJ-bound protein, DnaK hydrolyzes its bound ATP, resulting in the formation of a stable complex. GrpE releases ADP from DnaK; ATP binding to DnaK triggers the release of the substrate protein, thus completing the reaction cycle. Several rounds of ATP-dependent interactions between DnaJ, DnaK and GrpE are required for fully efficient folding. Also involved, together with DnaK and GrpE, in the DNA replication of plasmids through activation of initiation proteins. This chain is Chaperone protein DnaJ, found in Coxiella burnetii (strain RSA 493 / Nine Mile phase I).